The chain runs to 123 residues: Small ribosomal subunit protein bS6 (123 aa).

Positions 102 to 123 are disordered; the sequence is MLKQKEERAPRREAEAKEFAAE. A compositionally biased stretch (basic and acidic residues) spans 104–123; sequence KQKEERAPRREAEAKEFAAE.

The protein belongs to the bacterial ribosomal protein bS6 family.

In terms of biological role, binds together with bS18 to 16S ribosomal RNA. This is Small ribosomal subunit protein bS6 from Vibrio vulnificus (strain CMCP6).